We begin with the raw amino-acid sequence, 301 residues long: GTPase Era (301 aa).

In terms of domain architecture, Era-type G spans 4–173 (KAGFVALIGK…LECISKHLNP (170 aa)). Residues 12–19 (GKPNAGKS) are G1. 12–19 (GKPNAGKS) provides a ligand contact to GTP. The segment at 38–42 (NATRK) is G2. The G3 stretch occupies residues 64–67 (DTPG). Residues 64–68 (DTPGL) and 122–125 (SKID) contribute to the GTP site. Residues 122–125 (SKID) form a G4 region. The interval 152-154 (LSA) is G5. In terms of domain architecture, KH type-2 spans 204–280 (LSDEIPYESD…FLNLQVIAQK (77 aa)).

Belongs to the TRAFAC class TrmE-Era-EngA-EngB-Septin-like GTPase superfamily. Era GTPase family. In terms of assembly, monomer.

The protein resides in the cytoplasm. The protein localises to the cell inner membrane. Functionally, an essential GTPase that binds both GDP and GTP, with rapid nucleotide exchange. Plays a role in 16S rRNA processing and 30S ribosomal subunit biogenesis and possibly also in cell cycle regulation and energy metabolism. The chain is GTPase Era from Helicobacter pylori (strain P12).